Consider the following 485-residue polypeptide: Glutamate--tRNA ligase (485 aa).

The 'HIGH' region signature appears at 11–21 (PSPTGLLHIGN). The 'KMSKS' region signature appears at 255 to 259 (KLSKR). Residue lysine 258 coordinates ATP.

It belongs to the class-I aminoacyl-tRNA synthetase family. Glutamate--tRNA ligase type 1 subfamily. As to quaternary structure, monomer.

It localises to the cytoplasm. It carries out the reaction tRNA(Glu) + L-glutamate + ATP = L-glutamyl-tRNA(Glu) + AMP + diphosphate. In terms of biological role, catalyzes the attachment of glutamate to tRNA(Glu) in a two-step reaction: glutamate is first activated by ATP to form Glu-AMP and then transferred to the acceptor end of tRNA(Glu). The polypeptide is Glutamate--tRNA ligase (Streptococcus gordonii (strain Challis / ATCC 35105 / BCRC 15272 / CH1 / DL1 / V288)).